We begin with the raw amino-acid sequence, 455 residues long: E3 ubiquitin-protein ligase IPI1 (455 aa).

Residues 1–42 (MGAEEEEEPASAVGREGGGGGGGARAAGAGAGGDTADDDDSG) are disordered. Positions 15–33 (REGGGGGGGARAAGAGAGG) are enriched in gly residues. The segment at 51 to 97 (CSICLDAVVAGGGDRSTARLQCGHEFHLDCIGSAFNAKGVMQCPNCR) adopts an RING-type; atypical zinc-finger fold. Disordered stretches follow at residues 286-311 (LDSD…SRIP) and 426-455 (QWIG…IPRM). Residues 433 to 442 (SPPPPPPPPA) are compositionally biased toward pro residues.

As to quaternary structure, interacts with SPL14/IPA1.

Its subcellular location is the nucleus. The enzyme catalyses S-ubiquitinyl-[E2 ubiquitin-conjugating enzyme]-L-cysteine + [acceptor protein]-L-lysine = [E2 ubiquitin-conjugating enzyme]-L-cysteine + N(6)-ubiquitinyl-[acceptor protein]-L-lysine.. Its pathway is protein modification; protein ubiquitination. Functions as an E3 ligase that promotes polyubiquitination of SPL14/IPA1 for subsequent proteasomal degradation. Regulates plant architecture by modulating SPL14/IPA1 abundance. Promotes the degradation of SPL14/IPA1 in panicles, while it stabilizes SPL14/IPA1 in shoot apices. Ubiquitinates the SPL14/IPA1-mediated complex with 'Lys-48'-linked polyubiquitin in panicles and 'Lys-63'-linked polyubiquitin chains in the shoot apex. The polypeptide is E3 ubiquitin-protein ligase IPI1 (Oryza sativa subsp. japonica (Rice)).